The primary structure comprises 390 residues: DNA polymerase IV (390 aa).

In terms of domain architecture, UmuC spans 6 to 187 (VMHVDLDAFF…LDIAVMPGIG (182 aa)). Aspartate 10 and aspartate 105 together coordinate Mg(2+). Glutamate 106 is an active-site residue.

The protein belongs to the DNA polymerase type-Y family. In terms of assembly, monomer. Mg(2+) is required as a cofactor.

The protein localises to the cytoplasm. The catalysed reaction is DNA(n) + a 2'-deoxyribonucleoside 5'-triphosphate = DNA(n+1) + diphosphate. Functionally, poorly processive, error-prone DNA polymerase involved in untargeted mutagenesis. Copies undamaged DNA at stalled replication forks, which arise in vivo from mismatched or misaligned primer ends. These misaligned primers can be extended by PolIV. Exhibits no 3'-5' exonuclease (proofreading) activity. May be involved in translesional synthesis, in conjunction with the beta clamp from PolIII. This is DNA polymerase IV from Dehalococcoides mccartyi (strain ATCC BAA-2100 / JCM 16839 / KCTC 5957 / BAV1).